A 302-amino-acid polypeptide reads, in one-letter code: Surfeit locus protein 4 homolog (302 aa).

Helical transmembrane passes span 95–115, 120–140, 193–213, 215–235, 236–256, and 271–291; these read APLLLFVCVVLMLVGSTLVVF, AYAIGSLLFVTLLQAFAYGLI, VLLIFMFLGLLAKEGSGISWT, ILVHILSVTACAMVVIGFKAK, FFAAVLVLILSVANFIINSFW, and DFFQTLSIVGGLLYLVNTGPG. The Di-lysine motif signature appears at 299-302; it reads KKIY.

Belongs to the SURF4 family.

Its subcellular location is the endoplasmic reticulum membrane. In Schizosaccharomyces pombe (strain 972 / ATCC 24843) (Fission yeast), this protein is Surfeit locus protein 4 homolog.